We begin with the raw amino-acid sequence, 473 residues long: Thermostable beta-glucosidase B (473 aa).

E196 serves as the catalytic Proton donor. Residue E378 is the Nucleophile of the active site.

This sequence belongs to the glycosyl hydrolase 1 family.

It is found in the cytoplasm. The catalysed reaction is Hydrolysis of terminal, non-reducing beta-D-glucosyl residues with release of beta-D-glucose.. This Thermobispora bispora (Microbispora bispora) protein is Thermostable beta-glucosidase B (bglB).